Consider the following 152-residue polypeptide: SsrA-binding protein (152 aa).

Belongs to the SmpB family.

The protein localises to the cytoplasm. In terms of biological role, required for rescue of stalled ribosomes mediated by trans-translation. Binds to transfer-messenger RNA (tmRNA), required for stable association of tmRNA with ribosomes. tmRNA and SmpB together mimic tRNA shape, replacing the anticodon stem-loop with SmpB. tmRNA is encoded by the ssrA gene; the 2 termini fold to resemble tRNA(Ala) and it encodes a 'tag peptide', a short internal open reading frame. During trans-translation Ala-aminoacylated tmRNA acts like a tRNA, entering the A-site of stalled ribosomes, displacing the stalled mRNA. The ribosome then switches to translate the ORF on the tmRNA; the nascent peptide is terminated with the 'tag peptide' encoded by the tmRNA and targeted for degradation. The ribosome is freed to recommence translation, which seems to be the essential function of trans-translation. The polypeptide is SsrA-binding protein (Helicobacter acinonychis (strain Sheeba)).